The following is a 534-amino-acid chain: CTP synthase (534 aa).

Residues 1–265 (MKYIIVTGGV…SNYLLKKLIL (265 aa)) form an amidoligase domain region. Serine 12 provides a ligand contact to CTP. Serine 12 is a binding site for UTP. 13 to 18 (GLGKGI) is a binding site for ATP. Tyrosine 53 contributes to the L-glutamine binding site. Position 70 (aspartate 70) interacts with ATP. Mg(2+) contacts are provided by aspartate 70 and glutamate 140. CTP is bound by residues 147–149 (DIE), 186–191 (KTKPTQ), and lysine 222. UTP-binding positions include 186–191 (KTKPTQ) and lysine 222. The 242-residue stretch at 289–530 (NVAIVGKYTH…MGAMLKKSKE (242 aa)) folds into the Glutamine amidotransferase type-1 domain. An L-glutamine-binding site is contributed by glycine 352. Cysteine 379 functions as the Nucleophile; for glutamine hydrolysis in the catalytic mechanism. L-glutamine contacts are provided by residues 380 to 383 (LGMQ), glutamate 403, and arginine 460. Catalysis depends on residues histidine 503 and glutamate 505.

It belongs to the CTP synthase family. In terms of assembly, homotetramer.

The catalysed reaction is UTP + L-glutamine + ATP + H2O = CTP + L-glutamate + ADP + phosphate + 2 H(+). It carries out the reaction L-glutamine + H2O = L-glutamate + NH4(+). The enzyme catalyses UTP + NH4(+) + ATP = CTP + ADP + phosphate + 2 H(+). Its pathway is pyrimidine metabolism; CTP biosynthesis via de novo pathway; CTP from UDP: step 2/2. Allosterically activated by GTP, when glutamine is the substrate; GTP has no effect on the reaction when ammonia is the substrate. The allosteric effector GTP functions by stabilizing the protein conformation that binds the tetrahedral intermediate(s) formed during glutamine hydrolysis. Inhibited by the product CTP, via allosteric rather than competitive inhibition. In terms of biological role, catalyzes the ATP-dependent amination of UTP to CTP with either L-glutamine or ammonia as the source of nitrogen. Regulates intracellular CTP levels through interactions with the four ribonucleotide triphosphates. In Methanococcoides burtonii (strain DSM 6242 / NBRC 107633 / OCM 468 / ACE-M), this protein is CTP synthase.